The primary structure comprises 211 residues: Pyridoxine/pyridoxamine 5'-phosphate oxidase (211 aa).

Residues 7–10 (RTDY) and Lys-65 contribute to the substrate site. FMN is bound by residues 60-65 (RILLIK), 75-76 (FT), Arg-81, and Lys-82. Tyr-122, Arg-126, and Ser-130 together coordinate substrate. FMN-binding positions include 139–140 (QS) and Trp-183. Position 189 to 191 (189 to 191 (RLH)) interacts with substrate. Arg-193 contributes to the FMN binding site.

It belongs to the pyridoxamine 5'-phosphate oxidase family. Homodimer. FMN is required as a cofactor.

The catalysed reaction is pyridoxamine 5'-phosphate + O2 + H2O = pyridoxal 5'-phosphate + H2O2 + NH4(+). The enzyme catalyses pyridoxine 5'-phosphate + O2 = pyridoxal 5'-phosphate + H2O2. It functions in the pathway cofactor metabolism; pyridoxal 5'-phosphate salvage; pyridoxal 5'-phosphate from pyridoxamine 5'-phosphate: step 1/1. The protein operates within cofactor metabolism; pyridoxal 5'-phosphate salvage; pyridoxal 5'-phosphate from pyridoxine 5'-phosphate: step 1/1. Catalyzes the oxidation of either pyridoxine 5'-phosphate (PNP) or pyridoxamine 5'-phosphate (PMP) into pyridoxal 5'-phosphate (PLP). This is Pyridoxine/pyridoxamine 5'-phosphate oxidase from Janthinobacterium sp. (strain Marseille) (Minibacterium massiliensis).